The following is a 90-amino-acid chain: Electron transfer flavoprotein regulatory factor 1 (90 aa).

This sequence belongs to the complex I LYR family. In terms of assembly, homotetramer. Interacts with NDUFAB1. Interacts with ETFA. Interacts with ETFB.

Its subcellular location is the mitochondrion. Functionally, acts as a regulator of the electron transfer flavoprotein by promoting the removal of flavin from the ETF holoenzyme (composed of ETFA and ETFB). The polypeptide is Electron transfer flavoprotein regulatory factor 1 (Homo sapiens (Human)).